The chain runs to 111 residues: UPF0060 membrane protein CPR_1507 (111 aa).

4 helical membrane passes run 7–27 (IFYF…IWLW), 33–53 (SLIY…IPTL), 60–80 (FGRV…LCGW), and 85–105 (IIPD…VLII).

Belongs to the UPF0060 family.

The protein resides in the cell membrane. The polypeptide is UPF0060 membrane protein CPR_1507 (Clostridium perfringens (strain SM101 / Type A)).